Reading from the N-terminus, the 194-residue chain is Large ribosomal subunit protein uL10 (194 aa).

Low complexity predominate over residues 172–187; sequence EGGAAEAPAEAATEAP. Positions 172-194 are disordered; sequence EGGAAEAPAEAATEAPAEAEAES.

Belongs to the universal ribosomal protein uL10 family. In terms of assembly, part of the ribosomal stalk of the 50S ribosomal subunit. The N-terminus interacts with L11 and the large rRNA to form the base of the stalk. The C-terminus forms an elongated spine to which L12 dimers bind in a sequential fashion forming a multimeric L10(L12)X complex.

Functionally, forms part of the ribosomal stalk, playing a central role in the interaction of the ribosome with GTP-bound translation factors. The polypeptide is Large ribosomal subunit protein uL10 (Rhodococcus erythropolis (strain PR4 / NBRC 100887)).